The sequence spans 103 residues: Large ribosomal subunit protein bL21 (103 aa).

It belongs to the bacterial ribosomal protein bL21 family. As to quaternary structure, part of the 50S ribosomal subunit. Contacts protein L20.

Its function is as follows. This protein binds to 23S rRNA in the presence of protein L20. The sequence is that of Large ribosomal subunit protein bL21 from Mycobacterium leprae (strain Br4923).